The primary structure comprises 29 residues: Cytochrome b6-f complex subunit 8 (29 aa).

Residues 3 to 23 (IISIGWVSLMVVFTFSISLVV) traverse the membrane as a helical segment.

The protein belongs to the PetN family. The 4 large subunits of the cytochrome b6-f complex are cytochrome b6, subunit IV (17 kDa polypeptide, PetD), cytochrome f and the Rieske protein, while the 4 small subunits are PetG, PetL, PetM and PetN. The complex functions as a dimer.

The protein localises to the plastid. Its subcellular location is the chloroplast thylakoid membrane. Functionally, component of the cytochrome b6-f complex, which mediates electron transfer between photosystem II (PSII) and photosystem I (PSI), cyclic electron flow around PSI, and state transitions. This Staurastrum punctulatum (Green alga) protein is Cytochrome b6-f complex subunit 8.